A 314-amino-acid chain; its full sequence is Olfactory receptor 9I1 (314 aa).

Residues 1-25 are Extracellular-facing; that stretch reads MAKNNLTRVTEFILMGFMDHPKLEI. An N-linked (GlcNAc...) asparagine glycan is attached at N5. Residues 26–46 traverse the membrane as a helical segment; the sequence is PLFLVFLSFYLVTLLGNVGMI. At 47 to 54 the chain is on the cytoplasmic side; the sequence is MLIQVDVK. Residues 55–75 form a helical membrane-spanning segment; sequence LYTPMYFFLSHLSLLDACYTS. Topologically, residues 76-99 are extracellular; it reads VITPQILATLATGKTVISYGHCAA. Residues C97 and C189 are joined by a disulfide bond. Residues 100-120 form a helical membrane-spanning segment; it reads QFFLFTICAGTECFLLAVMAY. Residues 121–139 are Cytoplasmic-facing; sequence DRYAAIRNPLLYTVAMNPR. The helical transmembrane segment at 140–160 threads the bilayer; sequence LCWSLVVGAYVCGVSGAILRT. Residues 161 to 197 lie on the Extracellular side of the membrane; the sequence is TCTFTLSFCKDNQINFFFCDLPPLLKLACSDTANIEI. The helical transmembrane segment at 198-217 threads the bilayer; sequence VIIFFGNFVILANASVILIS. Residues 218-237 are Cytoplasmic-facing; that stretch reads YLLIIKTILKVKSSGGRAKT. Residues 238 to 258 traverse the membrane as a helical segment; that stretch reads FSTCASHITAVALFFGALIFM. Residues 259–271 are Extracellular-facing; sequence YLQSGSGKSLEED. A helical transmembrane segment spans residues 272-292; the sequence is KVVSVFYTVVIPMLNPLIYSL. The Cytoplasmic portion of the chain corresponds to 293 to 314; sequence RNKDVKDAFRKVARRLQVSLSM.

Belongs to the G-protein coupled receptor 1 family.

The protein resides in the cell membrane. Odorant receptor. This Homo sapiens (Human) protein is Olfactory receptor 9I1 (OR9I1).